Reading from the N-terminus, the 267-residue chain is NAD kinase (267 aa).

Aspartate 45 (proton acceptor) is an active-site residue. NAD(+) contacts are provided by residues 45–46 (DG), 122–123 (NE), arginine 148, aspartate 150, 161–166 (TAYNKS), alanine 185, and glutamine 223.

This sequence belongs to the NAD kinase family. A divalent metal cation is required as a cofactor.

It localises to the cytoplasm. It catalyses the reaction NAD(+) + ATP = ADP + NADP(+) + H(+). In terms of biological role, involved in the regulation of the intracellular balance of NAD and NADP, and is a key enzyme in the biosynthesis of NADP. Catalyzes specifically the phosphorylation on 2'-hydroxyl of the adenosine moiety of NAD to yield NADP. The chain is NAD kinase from Levilactobacillus brevis (strain ATCC 367 / BCRC 12310 / CIP 105137 / JCM 1170 / LMG 11437 / NCIMB 947 / NCTC 947) (Lactobacillus brevis).